Here is a 591-residue protein sequence, read N- to C-terminus: L-gulonolactone oxidase 2 (591 aa).

An N-terminal signal peptide occupies residues Met1–Ser27. The FAD-binding PCMH-type domain maps to Ser56–Met238.

It belongs to the oxygen-dependent FAD-linked oxidoreductase family. Requires FAD as cofactor.

The catalysed reaction is L-gulono-1,4-lactone + O2 = L-ascorbate + H2O2 + H(+). The protein operates within cofactor biosynthesis; L-ascorbate biosynthesis. Catalyzes the oxidation of L-gulono-1,4-lactone to ascorbic acid. L-gulono-1,4-lactone is oxidized to hydrogen peroxide and L-xylo-hexulonolactone which spontaneously isomerizes to L-ascorbate. This is L-gulonolactone oxidase 2 from Arabidopsis thaliana (Mouse-ear cress).